A 282-amino-acid polypeptide reads, in one-letter code: Blarina toxin (282 aa).

The first 17 residues, 1–17 (MCFLLLCLTLTLAGTGA), serve as a signal peptide directing secretion. Positions 18–29 (VPTGPSIEIHSR) are cleaved as a propeptide — activation peptide. The 250-residue stretch at 30-279 (IIGGWECDKH…YISWIQETIK (250 aa)) folds into the Peptidase S1 domain. 5 cysteine pairs are disulfide-bonded: Cys-36-Cys-194, Cys-57-Cys-73, Cys-170-Cys-240, Cys-205-Cys-219, and Cys-230-Cys-255. The active-site Charge relay system is His-72. Residue Ser-100 is glycosylated (O-linked (GalNAc...) serine). N-linked (GlcNAc...) asparagine glycosylation is found at Asn-109 and Asn-122. Asp-138 (charge relay system) is an active-site residue. The active-site Charge relay system is the Ser-234.

It belongs to the peptidase S1 family. Kallikrein subfamily. Submaxillary and sublingual salivary glands.

Its subcellular location is the secreted. Its activity is regulated as follows. Strongly inhibited by aprotinin, moderately inhibited by secretory leukoprotease inhibitor, the Kunitz-type soybean trypsin inhibitor, and leupeptin, and not inhibited by urinary trypsin inhibitor or alpha-1 protease inhibitor. Functionally, has kallikrein-like activity, converts kininogens to kinins, and has dilatory effects on the blood vessel walls. Shows highest activity toward Pro-Phe-Arg-MCA and Boc-Val-Leu-Lys-MCA in vitro. Has preference for Arg and Lys in position P1 and hydrophobic residues in position P2. This Blarina brevicauda (Northern short-tailed shrew) protein is Blarina toxin (BTX).